A 356-amino-acid chain; its full sequence is Serine/threonine-protein phosphatase 4 regulatory subunit 2 (356 aa).

The span at 202–240 (NEGAGDDEDDDQDYVDEDSATSEDEEEDVEEEEEEEGPE) shows a compositional bias: acidic residues. The segment at 202 to 335 (NEGAGDDEDD…PQLTTSATNV (134 aa)) is disordered. The span at 326-335 (PQLTTSATNV) shows a compositional bias: polar residues.

The protein belongs to the PPP4R2 family. In terms of assembly, regulatory subunit (R2) of the histone H2A phosphatase complex (HTP-C) consisting of PPH3, PSY2 and PSY4.

It localises to the nucleus. Its function is as follows. Regulatory subunit of the histone H2A phosphatase complex, which dephosphorylates H2AS128ph (gamma-H2A) that has been displaced from sites of DNA lesions in the double-stranded DNA break repair process. Dephosphorylation is necessary for efficient recovery from the DNA damage checkpoint. The chain is Serine/threonine-protein phosphatase 4 regulatory subunit 2 (PSY4) from Eremothecium gossypii (strain ATCC 10895 / CBS 109.51 / FGSC 9923 / NRRL Y-1056) (Yeast).